The following is an 857-amino-acid chain: Aminopeptidase N (857 aa).

Substrate-binding positions include glutamate 130 and 264–268 (GAMEN). Residue histidine 298 participates in Zn(2+) binding. The Proton acceptor role is filled by glutamate 299. Zn(2+) is bound by residues histidine 302 and glutamate 321.

This sequence belongs to the peptidase M1 family. In terms of assembly, monomer. The cofactor is Zn(2+). Post-translationally, the N-terminus is blocked.

Its subcellular location is the cytoplasm. The catalysed reaction is Release of an N-terminal amino acid, Xaa-|-Yaa- from a peptide, amide or arylamide. Xaa is preferably Ala, but may be most amino acids including Pro (slow action). When a terminal hydrophobic residue is followed by a prolyl residue, the two may be released as an intact Xaa-Pro dipeptide.. In terms of biological role, aminopeptidase with broad substrate specificity to several peptides. Shows strong preference for leucine but also cleaves next to Arg and Lys in peptide-bond-containing substrates. This Streptomyces lividans protein is Aminopeptidase N (pepN).